Consider the following 257-residue polypeptide: Type III pantothenate kinase (257 aa).

Position 7–14 (D7–V14) interacts with ATP. Residue G106–R109 coordinates substrate. D108 (proton acceptor) is an active-site residue. D128 serves as a coordination point for K(+). T132 contributes to the ATP binding site. T184 is a substrate binding site.

Belongs to the type III pantothenate kinase family. Homodimer. It depends on NH4(+) as a cofactor. K(+) is required as a cofactor.

It is found in the cytoplasm. The catalysed reaction is (R)-pantothenate + ATP = (R)-4'-phosphopantothenate + ADP + H(+). It participates in cofactor biosynthesis; coenzyme A biosynthesis; CoA from (R)-pantothenate: step 1/5. Functionally, catalyzes the phosphorylation of pantothenate (Pan), the first step in CoA biosynthesis. This chain is Type III pantothenate kinase, found in Nocardioides sp. (strain ATCC BAA-499 / JS614).